The following is a 400-amino-acid chain: Elongation factor Tu (400 aa).

The tr-type G domain occupies 10 to 208 (KPHVNVGTIG…AMDNYIPDPQ (199 aa)). The G1 stretch occupies residues 19 to 26 (GHIDHGKS). 19–26 (GHIDHGKS) contributes to the GTP binding site. Residue serine 26 participates in Mg(2+) binding. The G2 stretch occupies residues 60–64 (GITIN). The tract at residues 81–84 (DCPG) is G3. GTP is bound by residues 81–85 (DCPGH) and 136–139 (NKTD). Positions 136 to 139 (NKTD) are G4. The tract at residues 174–176 (SAL) is G5.

Belongs to the TRAFAC class translation factor GTPase superfamily. Classic translation factor GTPase family. EF-Tu/EF-1A subfamily. In terms of assembly, monomer.

The protein localises to the cytoplasm. It catalyses the reaction GTP + H2O = GDP + phosphate + H(+). Its function is as follows. GTP hydrolase that promotes the GTP-dependent binding of aminoacyl-tRNA to the A-site of ribosomes during protein biosynthesis. The chain is Elongation factor Tu from Thermotoga maritima (strain ATCC 43589 / DSM 3109 / JCM 10099 / NBRC 100826 / MSB8).